A 110-amino-acid chain; its full sequence is Eukaryotic translation initiation factor eIF1 (110 aa).

The protein belongs to the SUI1 family.

In terms of biological role, probably involved in translation. This Anopheles gambiae (African malaria mosquito) protein is Eukaryotic translation initiation factor eIF1.